The chain runs to 448 residues: Signal recognition particle protein (448 aa).

GTP-binding positions include 101-108, 182-186, and 240-243; these read GLQGSGKT, DSAGR, and SKFD.

This sequence belongs to the GTP-binding SRP family. SRP54 subfamily. In terms of assembly, part of the signal recognition particle protein translocation system, which is composed of SRP and FtsY. SRP is a ribonucleoprotein composed of Ffh and a 4.5S RNA molecule.

The protein localises to the cytoplasm. The catalysed reaction is GTP + H2O = GDP + phosphate + H(+). Involved in targeting and insertion of nascent membrane proteins into the cytoplasmic membrane. Binds to the hydrophobic signal sequence of the ribosome-nascent chain (RNC) as it emerges from the ribosomes. The SRP-RNC complex is then targeted to the cytoplasmic membrane where it interacts with the SRP receptor FtsY. Interaction with FtsY leads to the transfer of the RNC complex to the Sec translocase for insertion into the membrane, the hydrolysis of GTP by both Ffh and FtsY, and the dissociation of the SRP-FtsY complex into the individual components. This chain is Signal recognition particle protein, found in Helicobacter pylori (strain ATCC 700392 / 26695) (Campylobacter pylori).